A 274-amino-acid polypeptide reads, in one-letter code: uncharacterized protein (274 aa).

This is an uncharacterized protein from Treponema pallidum (strain Nichols).